The chain runs to 480 residues: 2-phosphoxylose phosphatase 1 (480 aa).

The Cytoplasmic segment spans residues 1–6; sequence MLHRNR. Residues 7 to 27 form a helical; Signal-anchor for type II membrane protein membrane-spanning segment; sequence FLVLLALAGLLAFLSLSLQFF. Residues 28–480 are Lumenal-facing; that stretch reads HLIPVSATKN…YYDACHGEGA (453 aa). The active-site Nucleophile is the His97. 3 N-linked (GlcNAc...) asparagine glycosylation sites follow: Asn194, Asn305, and Asn354. Asp379 functions as the Proton donor in the catalytic mechanism.

This sequence belongs to the histidine acid phosphatase family. In terms of assembly, interacts with B3GAT3; the interaction increases the 2-phosphoxylose phosphatase activity of PXYLP1 during completion of linkage region formation in a B3GAT3-mediated manner.

Its subcellular location is the golgi apparatus membrane. It catalyses the reaction 3-O-[beta-D-GlcA-(1-&gt;3)-beta-D-Gal-(1-&gt;3)-beta-D-Gal-(1-&gt;4)-beta-D-2-O-P-Xyl]-L-seryl-[protein] + H2O = 3-O-(beta-D-GlcA-(1-&gt;3)-beta-D-Gal-(1-&gt;3)-beta-D-Gal-(1-&gt;4)-beta-D-Xyl)-L-seryl-[protein] + phosphate. Functionally, responsible for the 2-O-dephosphorylation of xylose in the glycosaminoglycan-protein linkage region of proteoglycans thereby regulating the amount of mature glycosaminoglycan (GAG) chains. Sulfated glycosaminoglycans (GAGs), including heparan sulfate and chondroitin sulfate, are synthesized on the so-called common GAG-protein linkage region (GlcUAbeta1-3Galbeta1-3Galbeta1-4Xylbeta1-O-Ser) of core proteins, which is formed by the stepwise addition of monosaccharide residues by the respective specific glycosyltransferases. Xylose 2-O-dephosphorylation during completion of linkage region formation is a prerequisite for the initiation and efficient elongation of the repeating disaccharide region of GAG chains. The chain is 2-phosphoxylose phosphatase 1 from Mus musculus (Mouse).